Here is a 652-residue protein sequence, read N- to C-terminus: Threonine--tRNA ligase (652 aa).

The region spanning 1–63 is the TGS domain; the sequence is MAEISLTFPD…TESGDFQLIT (63 aa). Residues 246–545 are catalytic; the sequence is DHRVIGRDLD…LIEMYKGAFP (300 aa). Residues Cys-340, His-391, and His-522 each coordinate Zn(2+).

The protein belongs to the class-II aminoacyl-tRNA synthetase family. As to quaternary structure, homodimer. The cofactor is Zn(2+).

The protein localises to the cytoplasm. It carries out the reaction tRNA(Thr) + L-threonine + ATP = L-threonyl-tRNA(Thr) + AMP + diphosphate + H(+). Its function is as follows. Catalyzes the attachment of threonine to tRNA(Thr) in a two-step reaction: L-threonine is first activated by ATP to form Thr-AMP and then transferred to the acceptor end of tRNA(Thr). Also edits incorrectly charged L-seryl-tRNA(Thr). This Leuconostoc mesenteroides subsp. mesenteroides (strain ATCC 8293 / DSM 20343 / BCRC 11652 / CCM 1803 / JCM 6124 / NCDO 523 / NBRC 100496 / NCIMB 8023 / NCTC 12954 / NRRL B-1118 / 37Y) protein is Threonine--tRNA ligase.